A 118-amino-acid polypeptide reads, in one-letter code: Large ribosomal subunit protein bL20 (118 aa).

This sequence belongs to the bacterial ribosomal protein bL20 family.

Functionally, binds directly to 23S ribosomal RNA and is necessary for the in vitro assembly process of the 50S ribosomal subunit. It is not involved in the protein synthesizing functions of that subunit. In Sulfurihydrogenibium sp. (strain YO3AOP1), this protein is Large ribosomal subunit protein bL20.